Here is a 178-residue protein sequence, read N- to C-terminus: Killin (178 aa).

The DNA-binding element occupies 8-50 (SARPGRTVHVWGYRVEWKVRNGRKLQPSEWAGRGDLGGFKRRW).

It is found in the nucleus. Its function is as follows. DNA-binding protein involved in S phase checkpoint control-coupled apoptosis by mediating p53/TP53-induced apoptosis. Has the ability to inhibit DNA synthesis and S phase arrest coupled to apoptosis. Has affinity to both double- and single-stranded DNA. This Homo sapiens (Human) protein is Killin (KLLN).